Reading from the N-terminus, the 202-residue chain is Small ribosomal subunit protein bS20c (202 aa).

A chloroplast-targeting transit peptide spans 1–79 (MATIVQCLSS…KPMRQLIVCE (79 aa)). Positions 89 to 110 (SAAKRARQAEKRRVYNKSKKSE) are disordered.

Belongs to the bacterial ribosomal protein bS20 family. In terms of assembly, part of the 30S ribosomal subunit.

It is found in the plastid. It localises to the chloroplast. In terms of biological role, binds directly to 16S ribosomal RNA. This Arabidopsis thaliana (Mouse-ear cress) protein is Small ribosomal subunit protein bS20c (RPS20).